Consider the following 438-residue polypeptide: Glutamate-1-semialdehyde 2,1-aminomutase (438 aa).

Lys-277 is subject to N6-(pyridoxal phosphate)lysine.

The protein belongs to the class-III pyridoxal-phosphate-dependent aminotransferase family. HemL subfamily. Homodimer. Requires pyridoxal 5'-phosphate as cofactor.

It localises to the cytoplasm. It carries out the reaction (S)-4-amino-5-oxopentanoate = 5-aminolevulinate. Its pathway is porphyrin-containing compound metabolism; protoporphyrin-IX biosynthesis; 5-aminolevulinate from L-glutamyl-tRNA(Glu): step 2/2. It functions in the pathway porphyrin-containing compound metabolism; chlorophyll biosynthesis. The chain is Glutamate-1-semialdehyde 2,1-aminomutase from Synechococcus sp. (strain CC9311).